Consider the following 134-residue polypeptide: Arsenate reductase (134 aa).

Active-site nucleophile residues include Cys-11, Cys-83, and Cys-90. 2 disulfide bridges follow: Cys-11-Cys-83 and Cys-83-Cys-90.

The protein belongs to the low molecular weight phosphotyrosine protein phosphatase family. Thioredoxin-coupled ArsC subfamily.

The protein localises to the cytoplasm. It carries out the reaction arsenate + [thioredoxin]-dithiol + H(+) = arsenite + [thioredoxin]-disulfide + H2O. Functionally, catalyzes the reduction of arsenate [As(V)] to arsenite [As(III)]. The chain is Arsenate reductase from Bacillus cereus (strain 03BB102).